The chain runs to 82 residues: CLAVATA3/ESR (CLE)-related protein 53 (82 aa).

The signal sequence occupies residues 1-26 (MATSTNSREFLIFICVLTLLVVRSEA). Residues Pro74 and Pro77 each carry the hydroxyproline modification. A glycan (O-linked (Ara...) hydroxyproline) is linked at Pro77.

Belongs to the CLV3/ESR signal peptide family. In terms of processing, the O-glycosylation (arabinosylation) of the hydroxyproline Pro-77 enhances binding affinity of the CLE53p peptide for its receptor. In terms of tissue distribution, expressed in root vasculature.

Its subcellular location is the secreted. It localises to the extracellular space. Signaling peptide involved in the regulation of root colonization by arbuscular mycorrhizal (AM) fungi. Moves from root to shoot to function with the receptor kinase SUNN, in a signaling pathway that repress strigolactone biosynthetic genes and strigolactone content in the roots, and consequently reduces the promotion of further colonization by AM fungi. This Medicago truncatula (Barrel medic) protein is CLAVATA3/ESR (CLE)-related protein 53.